Reading from the N-terminus, the 39-residue chain is Sarcotoxin-1C (39 aa).

Arg-39 carries the arginine amide modification.

This sequence belongs to the cecropin family.

Its subcellular location is the secreted. Its function is as follows. Sarcotoxins, which are potent bactericidal proteins, are produced in response to injury. They are cytotoxic to both Gram-positive and Gram-negative bacteria. The polypeptide is Sarcotoxin-1C (Sarcophaga peregrina (Flesh fly)).